A 636-amino-acid polypeptide reads, in one-letter code: 1-deoxy-D-xylulose-5-phosphate synthase 2 (636 aa).

Residues histidine 78 and 119–121 (AHS) each bind thiamine diphosphate. Residue aspartate 150 participates in Mg(2+) binding. Thiamine diphosphate is bound by residues 151-152 (GS), asparagine 179, tyrosine 288, and glutamate 370. Asparagine 179 provides a ligand contact to Mg(2+).

This sequence belongs to the transketolase family. DXPS subfamily. In terms of assembly, homodimer. Mg(2+) is required as a cofactor. It depends on thiamine diphosphate as a cofactor.

It catalyses the reaction D-glyceraldehyde 3-phosphate + pyruvate + H(+) = 1-deoxy-D-xylulose 5-phosphate + CO2. It participates in metabolic intermediate biosynthesis; 1-deoxy-D-xylulose 5-phosphate biosynthesis; 1-deoxy-D-xylulose 5-phosphate from D-glyceraldehyde 3-phosphate and pyruvate: step 1/1. In terms of biological role, catalyzes the acyloin condensation reaction between C atoms 2 and 3 of pyruvate and glyceraldehyde 3-phosphate to yield 1-deoxy-D-xylulose-5-phosphate (DXP). This chain is 1-deoxy-D-xylulose-5-phosphate synthase 2, found in Jannaschia sp. (strain CCS1).